A 398-amino-acid chain; its full sequence is Chalcone synthase (398 aa).

C169 is an active-site residue.

This sequence belongs to the thiolase-like superfamily. Chalcone/stilbene synthases family.

The catalysed reaction is (E)-4-coumaroyl-CoA + 3 malonyl-CoA + 3 H(+) = 2',4,4',6'-tetrahydroxychalcone + 3 CO2 + 4 CoA. It participates in secondary metabolite biosynthesis; flavonoid biosynthesis. The primary product of this enzyme is 4,2',4',6'-tetrahydroxychalcone (also termed naringenin-chalcone or chalcone) which can under specific conditions spontaneously isomerize into naringenin. This chain is Chalcone synthase (CHS), found in Petroselinum crispum (Parsley).